We begin with the raw amino-acid sequence, 396 residues long: Imidazolonepropionase (396 aa).

The Fe(3+) site is built by histidine 70 and histidine 72. Residues histidine 70 and histidine 72 each coordinate Zn(2+). 4-imidazolone-5-propanoate-binding residues include arginine 79, tyrosine 137, and histidine 164. Tyrosine 137 is a binding site for N-formimidoyl-L-glutamate. Fe(3+) is bound at residue histidine 227. Histidine 227 lines the Zn(2+) pocket. Glutamine 230 contributes to the 4-imidazolone-5-propanoate binding site. Position 301 (aspartate 301) interacts with Fe(3+). Aspartate 301 is a binding site for Zn(2+). N-formimidoyl-L-glutamate is bound by residues asparagine 303 and glycine 305. Serine 306 contributes to the 4-imidazolone-5-propanoate binding site.

It belongs to the metallo-dependent hydrolases superfamily. HutI family. It depends on Zn(2+) as a cofactor. Fe(3+) serves as cofactor.

It localises to the cytoplasm. The catalysed reaction is 4-imidazolone-5-propanoate + H2O = N-formimidoyl-L-glutamate. The protein operates within amino-acid degradation; L-histidine degradation into L-glutamate; N-formimidoyl-L-glutamate from L-histidine: step 3/3. In terms of biological role, catalyzes the hydrolytic cleavage of the carbon-nitrogen bond in imidazolone-5-propanoate to yield N-formimidoyl-L-glutamate. It is the third step in the universal histidine degradation pathway. The polypeptide is Imidazolonepropionase (Mycolicibacterium smegmatis (strain ATCC 700084 / mc(2)155) (Mycobacterium smegmatis)).